The primary structure comprises 320 residues: Cytochrome c biogenesis protein CcsA (320 aa).

8 consecutive transmembrane segments (helical) span residues 9 to 29 (ILAH…WGTL), 36 to 56 (LSSS…GLLI), 70 to 90 (LYES…LLEV), 97 to 117 (WLGA…TLGL), 143 to 163 (ILFS…LLVI), 227 to 247 (AIGL…IWAN), 254 to 274 (WSWD…AIYL), and 288 to 308 (AIVA…VNLL).

This sequence belongs to the CcmF/CycK/Ccl1/NrfE/CcsA family. May interact with Ccs1.

The protein localises to the plastid. Its subcellular location is the chloroplast thylakoid membrane. Required during biogenesis of c-type cytochromes (cytochrome c6 and cytochrome f) at the step of heme attachment. The protein is Cytochrome c biogenesis protein CcsA of Pinus thunbergii (Japanese black pine).